Reading from the N-terminus, the 163-residue chain is Olfactory marker protein (163 aa).

The residue at position 2 (A2) is an N-acetylalanine.

It belongs to the olfactory marker protein family. In terms of assembly, interacts with BEX1 and BEX2. In terms of tissue distribution, uniquely associated with mature olfactory receptor neurons.

The protein resides in the cytoplasm. In terms of biological role, may act as a modulator of the olfactory signal-transduction cascade. This chain is Olfactory marker protein (Omp), found in Mus musculus (Mouse).